A 274-amino-acid chain; its full sequence is Ceramide synthase (274 aa).

Positions 34 to 261 constitute a TLC domain; the sequence is ADAVIVSARL…ICRGACRLFW (228 aa). 4 helical membrane-spanning segments follow: residues 130-150, 159-179, 194-214, and 223-243; these read FLMV…SVVW, LGCM…KILI, ALML…LYWA, and LLAV…LLLA.

In terms of tissue distribution, expressed in testis. Expressed in the retina with higher expression levels in the macular than in the peripheral region.

The protein localises to the golgi apparatus membrane. The protein resides in the endoplasmic reticulum membrane. It catalyses the reaction sphing-4-enine + octadecanoyl-CoA = N-octadecanoylsphing-4-enine + CoA + H(+). It carries out the reaction eicosanoyl-CoA + sphing-4-enine = N-eicosanoyl-sphing-4-enine + CoA + H(+). The enzyme catalyses sphing-4-enine + hexadecanoyl-CoA = N-hexadecanoylsphing-4-enine + CoA + H(+). In terms of biological role, involved in ceramide synthesis. This Homo sapiens (Human) protein is Ceramide synthase.